Here is a 361-residue protein sequence, read N- to C-terminus: Geranylgeranyl pyrophosphate synthase 3 (361 aa).

Residues 44 to 63 are disordered; the sequence is DSNGSKELAPNGAQSRVQKP. Isopentenyl diphosphate-binding residues include lysine 81, arginine 84, and histidine 113. Residues aspartate 120 and aspartate 124 each contribute to the Mg(2+) site. Position 129 (arginine 129) interacts with dimethylallyl diphosphate. Arginine 130 provides a ligand contact to isopentenyl diphosphate. Lysine 207, threonine 208, and glutamine 244 together coordinate dimethylallyl diphosphate. Position 247 (aspartate 247) interacts with Mg(2+). Residues asparagine 251, lysine 261, and lysine 271 each contribute to the dimethylallyl diphosphate site.

It belongs to the FPP/GGPP synthase family. Mg(2+) serves as cofactor.

The catalysed reaction is isopentenyl diphosphate + dimethylallyl diphosphate = (2E)-geranyl diphosphate + diphosphate. It catalyses the reaction isopentenyl diphosphate + (2E)-geranyl diphosphate = (2E,6E)-farnesyl diphosphate + diphosphate. The enzyme catalyses isopentenyl diphosphate + (2E,6E)-farnesyl diphosphate = (2E,6E,10E)-geranylgeranyl diphosphate + diphosphate. Geranylgeranyl pyrophosphate synthase; part of the gene cluster 25 that mediates the biosynthesis of an isoprenoid secondary metabolite. The protein is Geranylgeranyl pyrophosphate synthase 3 (GGS3) of Zymoseptoria tritici (strain CBS 115943 / IPO323) (Speckled leaf blotch fungus).